The following is a 398-amino-acid chain: G2/mitotic-specific cyclin-B2 (398 aa).

Thr8 carries the phosphothreonine modification. Phosphoserine is present on residues Ser11, Ser77, and Ser92. Thr94 bears the Phosphothreonine mark. Ser99, Ser392, and Ser398 each carry phosphoserine.

The protein belongs to the cyclin family. Cyclin AB subfamily. In terms of assembly, interacts with the CDK1 protein kinase to form a serine/threonine kinase holoenzyme complex also known as maturation promoting factor (MPF). The cyclin subunit imparts substrate specificity to the complex.

In terms of biological role, essential for the control of the cell cycle at the G2/M (mitosis) transition. This is G2/mitotic-specific cyclin-B2 (CCNB2) from Macaca fascicularis (Crab-eating macaque).